Consider the following 338-residue polypeptide: Phytanoyl-CoA dioxygenase, peroxisomal (338 aa).

The N-terminal 30 residues, 1-30 (MEQLRAAARLQIVLGHLGRPSAGAVVAHPT), are a transit peptide targeting the peroxisome. Lys-59 and Lys-108 each carry N6-succinyllysine. 2-oxoglutarate-binding positions include Lys-120, Met-157, 175 to 177 (HQD), and Trp-193. The Fe cation site is built by His-175 and Asp-177. 2 positions are modified to N6-succinyllysine: Lys-231 and Lys-252. Position 264 (His-264) interacts with Fe cation. 2 residues coordinate 2-oxoglutarate: Ser-266 and Arg-275. Ser-317 is modified (phosphoserine).

It belongs to the PhyH family. In terms of assembly, interacts with FKBP52. Interacts with PHYHIP. Fe cation is required as a cofactor. It depends on L-ascorbate as a cofactor. Requires ATP as cofactor. The cofactor is Mg(2+). As to expression, expressed in liver, kidney, and T-cells, but not in spleen, brain, heart, lung and skeletal muscle.

Its subcellular location is the peroxisome. The catalysed reaction is phytanoyl-CoA + 2-oxoglutarate + O2 = 2-hydroxyphytanoyl-CoA + succinate + CO2. The enzyme catalyses 3-methylhexadecanoyl-CoA + 2-oxoglutarate + O2 = 2-hydroxy-3-methylhexadecanoyl-CoA + succinate + CO2. It catalyses the reaction hexadecanoyl-CoA + 2-oxoglutarate + O2 = 2-hydroxyhexadecanoyl-CoA + succinate + CO2. It carries out the reaction octanoyl-CoA + 2-oxoglutarate + O2 = 2-hydroxyoctanoyl-CoA + succinate + CO2. The catalysed reaction is decanoyl-CoA + 2-oxoglutarate + O2 = 2-hydroxydecanoyl-CoA + succinate + CO2. The enzyme catalyses 3-methylbutanoyl-CoA + 2-oxoglutarate + O2 = 2-hydroxy-3-methylbutanoyl-CoA + succinate + CO2. It catalyses the reaction heptadecanoyl-CoA + 2-oxoglutarate + O2 = 2-hydroxyheptadecanoyl-CoA + succinate + CO2. It carries out the reaction eicosanoyl-CoA + 2-oxoglutarate + O2 = 2-hydroxyeicosanoyl-CoA + succinate + CO2. The catalysed reaction is octadecanoyl-CoA + 2-oxoglutarate + O2 = 2-hydroxyoctadecanoyl-CoA + succinate + CO2. The enzyme catalyses dodecanoyl-CoA + 2-oxoglutarate + O2 = 2-hydroxydodecanoyl-CoA + succinate + CO2. It catalyses the reaction tetradecanoyl-CoA + 2-oxoglutarate + O2 = 2-hydroxytetradecanoyl-CoA + succinate + CO2. It carries out the reaction hexanoyl-CoA + 2-oxoglutarate + O2 = 2-hydroxyhexanoyl-CoA + succinate + CO2. The catalysed reaction is butanoyl-CoA + 2-oxoglutarate + O2 = 2-hydroxybutanoyl-CoA + succinate + CO2. The enzyme catalyses 3-methylnonanoyl-CoA + 2-oxoglutarate + O2 = 2-hydroxy-3-methylnonanoyl-CoA + succinate + CO2. It catalyses the reaction 3-methylundecanoyl-CoA + 2-oxoglutarate + O2 = 2-hydroxy-3-methylundecanoyl-CoA + succinate + CO2. It carries out the reaction 3-methyldodecanoyl-CoA + 2-oxoglutarate + O2 = 2-hydroxy-3-methyldodecanoyl-CoA + succinate + CO2. It participates in lipid metabolism; fatty acid metabolism. Functionally, catalyzes the 2-hydroxylation of not only racemic phytanoyl-CoA and the isomers of 3-methylhexadecanoyl-CoA, but also a variety of other mono-branched 3-methylacyl-CoA esters (with a chain length of at least seven carbon atoms) and straight-chain acyl-CoA esters (with a chain length longer than four carbon atoms). Does not hydroxylate long and very long straight chain acyl-CoAs or 2-methyl- and 4-methyl-branched acyl-CoAs. The chain is Phytanoyl-CoA dioxygenase, peroxisomal (PHYH) from Homo sapiens (Human).